The primary structure comprises 360 residues: Inward rectifier potassium channel 13 (360 aa).

The Cytoplasmic segment spans residues 1–50 (MDGSHCKVIAPLLTERHQRMVTKDGHSTLQMDGAQTGLAYLRDAWGILMD). The helical transmembrane segment at 51-77 (MRWRWMMLVFSASFVIHWLVFAVLWYI) threads the bilayer. Residues 78-105 (LAEMNGDLGLDHDAPPENHTICVKYITS) are Extracellular-facing. Positions 106 to 122 (FTAAFSFSLETQLTIGY) form an intramembrane region, helical; Pore-forming. The Selectivity filter signature appears at 119–124 (TIGYGT). At 123–131 (GTMFPSGDC) the chain is on the extracellular side. The helical transmembrane segment at 132–157 (PSAIALLAIQMLLGLMLEAFITGAFV) threads the bilayer. Residues 158–360 (AKIARPKNRA…FQISETGLTE (203 aa)) are Cytoplasmic-facing. At S287 the chain carries Phosphoserine.

The protein belongs to the inward rectifier-type potassium channel (TC 1.A.2.1) family. As to quaternary structure, homotetramer. Interacts with RAB28; the interaction may facilitate cone outer segments phagocytosis. In terms of processing, phosphorylation at Ser-287 by PKA increases them.

It is found in the membrane. The protein resides in the cell membrane. The enzyme catalyses K(+)(in) = K(+)(out). Inhibited by Ba(2+) and Cs(+), although sensitivity to those inhibitors is much lower than in other Kir channels. Its function is as follows. Inward rectifier potassium channels are characterized by a greater tendency to allow potassium to flow into the cell rather than out of it. Their voltage dependence is regulated by the concentration of extracellular potassium; as external potassium is raised, the voltage range of the channel opening shifts to more positive voltages. The inward rectification is mainly due to the blockage of outward current by internal magnesium. KCNJ13 has a very low single channel conductance, low sensitivity to block by external barium and cesium, and no dependence of its inward rectification properties on the internal blocking particle magnesium. This chain is Inward rectifier potassium channel 13 (KCNJ13), found in Bos taurus (Bovine).